The primary structure comprises 411 residues: 2,3-bisphosphoglycerate-independent phosphoglycerate mutase (411 aa).

This sequence belongs to the BPG-independent phosphoglycerate mutase family. A-PGAM subfamily.

It carries out the reaction (2R)-2-phosphoglycerate = (2R)-3-phosphoglycerate. It participates in carbohydrate degradation; glycolysis; pyruvate from D-glyceraldehyde 3-phosphate: step 3/5. In terms of biological role, catalyzes the interconversion of 2-phosphoglycerate and 3-phosphoglycerate. The chain is 2,3-bisphosphoglycerate-independent phosphoglycerate mutase from Pyrobaculum arsenaticum (strain DSM 13514 / JCM 11321 / PZ6).